The following is an 85-amino-acid chain: UPF0291 protein SPCG_1462 (85 aa).

The segment at 62–85 (TPEKLRQVQREKGLHGRSLDDPNS) is disordered.

Belongs to the UPF0291 family.

Its subcellular location is the cytoplasm. In Streptococcus pneumoniae (strain CGSP14), this protein is UPF0291 protein SPCG_1462.